Reading from the N-terminus, the 603-residue chain is Iron-sulfur clusters transporter ATM1, mitochondrial (603 aa).

The chain crosses the membrane as a helical span at residues 20–41; it reads VLLAVGLLVGGKVLNVQVPFFF. Positions 20–310 constitute an ABC transmembrane type-1 domain; the sequence is VLLAVGLLVG…LGSVYRELRQ (291 aa). At 42 to 64 the chain is on the mitochondrial intermembrane side; the sequence is REIVDSLNVDIAATGGTVATVAG. The chain crosses the membrane as a helical span at residues 65–88; it reads TMIFAYGASRIGAVVSQELRNAVF. At 89–137 the chain is on the mitochondrial matrix side; that stretch reads SSVAQKAIRRVATRTFGHLLNLDLNFHLSKQTGGLTRAIDRGTKGISFL. Residues 138–161 form a helical membrane-spanning segment; sequence LTSMVFHIVPTALEISMVCGILTY. Gln162 is a topological domain (mitochondrial intermembrane). The chain crosses the membrane as a helical span at residues 163 to 183; the sequence is FGWEFAAVTALTMSAYTAFTI. Topologically, residues 184 to 249 are mitochondrial matrix; sequence WTTAWRTKFR…SSIKVATSLA (66 aa). Residues 189–193 and 252–255 contribute to the glutathione site; these read RTKFR and NSGQ. A helical membrane pass occupies residues 250–268; that stretch reads FLNSGQNIIFSSALTIMMW. Residues 269–283 are Mitochondrial intermembrane-facing; it reads LGAKGIVAGSLSVGD. A helical membrane pass occupies residues 284-305; sequence LVLINQLVFQLSVPLNFLGSVY. Position 302 (Gly302) interacts with glutathione. Residues 306–603 are Mitochondrial matrix-facing; it reads RELRQSLLDM…SEREAPVPVK (298 aa). In terms of domain architecture, ABC transporter spans 345 to 581; that stretch reads IRFDNVSFGY…NGLYTELWMA (237 aa). Residues Tyr354 and 378-389 contribute to the ATP site; that span reads GPSGCGKSTLLR.

Belongs to the ABC transporter superfamily. ABCB family. Heavy Metal importer (TC 3.A.1.210) subfamily. Homodimer.

It is found in the mitochondrion inner membrane. Performs an essential function in the generation of cytoplasmic iron-sulfur proteins by mediating the ATP-dependent export of Fe/S cluster precursors synthesized by NFS1 and other mitochondrial proteins. Hydrolyzes ATP. Binds glutathione and may function by transporting a glutathione-conjugated iron-sulfur compound. In Chaetomium globosum (strain ATCC 6205 / CBS 148.51 / DSM 1962 / NBRC 6347 / NRRL 1970) (Soil fungus), this protein is Iron-sulfur clusters transporter ATM1, mitochondrial.